Reading from the N-terminus, the 228-residue chain is MLYNVSKGVVYSDTALQGQDGDREGMWVGAGGALAPNTSSLFPPEPPGASSNIIPVYCALLATVILGLLAYVAFKCWRSHKQRQQLAKARTVELGDPDRDQRRGDSNVFVDSPPSLEPCIPSQGPHPDLGCQLYLHIPQQQQEEVQRLLMMGEPAKGWQELAGHLGYQAEAVETMACDQMPAYTLLRNWAAQEGNRATLRVLEDALAAIGREDVVQVLSSPAESSSVV.

Residues 1 to 52 are Extracellular-facing; it reads MLYNVSKGVVYSDTALQGQDGDREGMWVGAGGALAPNTSSLFPPEPPGASSN. N-linked (GlcNAc...) asparagine glycosylation is found at Asn-4 and Asn-37. A helical; Signal-anchor for type III membrane protein transmembrane segment spans residues 53–73; sequence IIPVYCALLATVILGLLAYVA. Residues 74–228 are Cytoplasmic-facing; that stretch reads FKCWRSHKQR…SSPAESSSVV (155 aa). A disordered region spans residues 87–122; sequence AKARTVELGDPDRDQRRGDSNVFVDSPPSLEPCIPS. Over residues 90 to 105 the composition is skewed to basic and acidic residues; sequence RTVELGDPDRDQRRGD. The Death domain occupies 143–222; sequence EEVQRLLMMG…DVVQVLSSPA (80 aa).

In terms of assembly, interacts with NGFR. Interacts with NTRK1. Interacts with SORT1. As to expression, detected in lung and testis.

The protein resides in the cell membrane. It localises to the nucleus. In terms of biological role, modulates NTRK1 signaling. Can activate several intracellular signaling pathways, leading to activation of JUN. Promotes apoptosis. Promotes translocation of SORT1 to the cell membrane, and thereby hinders lysosomal degradation of SOTR1 and promotes its interaction with NGFR. The sequence is that of Death domain-containing membrane protein NRADD (Nradd) from Mus musculus (Mouse).